Reading from the N-terminus, the 1772-residue chain is Putative stereocilin-like protein (1772 aa).

Positions 1 to 25 (MALSLWPLLLLLLLLLLLSFAVTLA) are cleaved as a signal peptide. N-linked (GlcNAc...) asparagine glycosylation is found at asparagine 65, asparagine 427, asparagine 476, and asparagine 565.

Belongs to the stereocilin family.

Its subcellular location is the secreted. This chain is Putative stereocilin-like protein (STRCP1), found in Homo sapiens (Human).